Reading from the N-terminus, the 350-residue chain is Biotin synthase (350 aa).

The region spanning 41–268 is the Radical SAM core domain; it reads NEVQISRLLS…LSRVRLSAGR (228 aa). [4Fe-4S] cluster contacts are provided by cysteine 56, cysteine 60, and cysteine 63. Residues cysteine 100, cysteine 131, cysteine 191, and arginine 263 each contribute to the [2Fe-2S] cluster site.

It belongs to the radical SAM superfamily. Biotin synthase family. Homodimer. [4Fe-4S] cluster is required as a cofactor. [2Fe-2S] cluster serves as cofactor.

It carries out the reaction (4R,5S)-dethiobiotin + (sulfur carrier)-SH + 2 reduced [2Fe-2S]-[ferredoxin] + 2 S-adenosyl-L-methionine = (sulfur carrier)-H + biotin + 2 5'-deoxyadenosine + 2 L-methionine + 2 oxidized [2Fe-2S]-[ferredoxin]. It participates in cofactor biosynthesis; biotin biosynthesis; biotin from 7,8-diaminononanoate: step 2/2. Functionally, catalyzes the conversion of dethiobiotin (DTB) to biotin by the insertion of a sulfur atom into dethiobiotin via a radical-based mechanism. The protein is Biotin synthase of Shewanella putrefaciens (strain CN-32 / ATCC BAA-453).